We begin with the raw amino-acid sequence, 259 residues long: Tryptophan synthase alpha chain (259 aa).

Residues E42 and D53 each act as proton acceptor in the active site.

Belongs to the TrpA family. Tetramer of two alpha and two beta chains.

The catalysed reaction is (1S,2R)-1-C-(indol-3-yl)glycerol 3-phosphate + L-serine = D-glyceraldehyde 3-phosphate + L-tryptophan + H2O. It participates in amino-acid biosynthesis; L-tryptophan biosynthesis; L-tryptophan from chorismate: step 5/5. In terms of biological role, the alpha subunit is responsible for the aldol cleavage of indoleglycerol phosphate to indole and glyceraldehyde 3-phosphate. This is Tryptophan synthase alpha chain from Erythrobacter litoralis (strain HTCC2594).